The primary structure comprises 173 residues: Gamma-crystallin S-2 (173 aa).

Beta/gamma crystallin 'Greek key' domains follow at residues G2–S40 and D41–T83. The segment at H84–P88 is connecting peptide. 2 Beta/gamma crystallin 'Greek key' domains span residues Y89–G129 and A130–M172.

The protein belongs to the beta/gamma-crystallin family.

Its function is as follows. Crystallins are the dominant structural components of the vertebrate eye lens. The chain is Gamma-crystallin S-2 (GS-2) from Chiloscyllium indicum (Slender bamboo shark).